The chain runs to 263 residues: Putative cysteine-rich repeat secretory protein 31 (263 aa).

The first 32 residues, 1 to 32 (MHNSYSLSKRLVLVLFLAVVATQLFLIRNVSS), serve as a signal peptide directing secretion. 2 consecutive Gnk2-homologous domains span residues 39 to 141 (YLHH…AIEV) and 146 to 260 (YDNN…FYPF).

The protein belongs to the cysteine-rich repeat secretory protein family.

The protein localises to the secreted. The polypeptide is Putative cysteine-rich repeat secretory protein 31 (CRRSP31) (Arabidopsis thaliana (Mouse-ear cress)).